An 84-amino-acid polypeptide reads, in one-letter code: ATP synthase subunit c (84 aa).

Helical transmembrane passes span isoleucine 9–leucine 29 and isoleucine 54–isoleucine 74.

This sequence belongs to the ATPase C chain family. In terms of assembly, F-type ATPases have 2 components, F(1) - the catalytic core - and F(0) - the membrane proton channel. F(1) has five subunits: alpha(3), beta(3), gamma(1), delta(1), epsilon(1). F(0) has three main subunits: a(1), b(2) and c(10-14). The alpha and beta chains form an alternating ring which encloses part of the gamma chain. F(1) is attached to F(0) by a central stalk formed by the gamma and epsilon chains, while a peripheral stalk is formed by the delta and b chains.

It is found in the cell inner membrane. Functionally, f(1)F(0) ATP synthase produces ATP from ADP in the presence of a proton or sodium gradient. F-type ATPases consist of two structural domains, F(1) containing the extramembraneous catalytic core and F(0) containing the membrane proton channel, linked together by a central stalk and a peripheral stalk. During catalysis, ATP synthesis in the catalytic domain of F(1) is coupled via a rotary mechanism of the central stalk subunits to proton translocation. Key component of the F(0) channel; it plays a direct role in translocation across the membrane. A homomeric c-ring of between 10-14 subunits forms the central stalk rotor element with the F(1) delta and epsilon subunits. The protein is ATP synthase subunit c of Histophilus somni (strain 2336) (Haemophilus somnus).